Here is a 324-residue protein sequence, read N- to C-terminus: 2-oxoisovalerate dehydrogenase subunit beta (324 aa).

Residues glutamate 29, 58–60 (LSE), glutamine 82, and 86–89 (YIFP) contribute to the thiamine diphosphate site. Substrate-binding positions include 83–86 (FADY) and histidine 129. Histidine 129 acts as the Proton acceptor in catalysis.

Heterotetramer of two alpha and two beta chains. Directly associated with ODBA in the E1 complex. It depends on thiamine diphosphate as a cofactor.

It carries out the reaction N(6)-[(R)-lipoyl]-L-lysyl-[protein] + 3-methyl-2-oxobutanoate + H(+) = N(6)-[(R)-S(8)-2-methylpropanoyldihydrolipoyl]-L-lysyl-[protein] + CO2. In terms of biological role, the branched-chain alpha-keto dehydrogenase complex catalyzes the overall conversion of alpha-keto acids to acyl-CoA and CO(2). It contains multiple copies of three enzymatic components: branched-chain alpha-keto acid decarboxylase (E1), lipoamide acyltransferase (E2) and lipoamide dehydrogenase (E3). This is 2-oxoisovalerate dehydrogenase subunit beta from Thermus thermophilus (strain ATCC BAA-163 / DSM 7039 / HB27).